Consider the following 666-residue polypeptide: MLVKKLAGKGGGRESGSEDPRPLGQRCAGTMPSCTALATLLSVVAVAFCFYLGVKTNDLQARIAALESAKGTPSFHPLSDTVDELKAMVQEKVERLLAQKSYEHMAKIRTAREAPLECNCPAGPPGKRGKRGRRGESGPPGQPGPQGPPGPKGDKGEQGDQGPRMVFPKINHGFLSADQQLIKRRLIKGDQGQAGPPGPPGPPGPRGPPGDTGKDGPRGMPGVPGEPGKPGEQGLMGPLGPPGQKGSIGAPGTPGMDGQKGEPGSPGAAGQSGLPGPKGEPGKEGEKGDAGENGPKGDTGEKGDPGSSAAGIKGEPGESGRPGQKGEPGLPGLPGLPGIKGEPGFIGPQGEPGLPGLPGTKGDRGEAGPPGRGERGDPGAPGPKGKQGESGARGPKGSKGDRGDKGDSGALGPRGPPGQKGDPGATEIIDYNGNLHEALQRITTLTVTGPPGPPGPQGLQGPKGEQGSPGIPGVDGEQGLKGSKGDMGDPGVPGEKGGLGLPGLPGANGVKGEKGDTGLPGPQGPSIIGPPGPPGPHGPPGPMGPHGLPGPKGASGLDGKPGSRGADGPIGPHGPAGPKGERGEKGAMGEPGPRGPYGLPGKDGEPGLDGFPGPRGEKGDLGEKGEKGFRGVKGEKGEPGQPGLDGLDAPCQLGPDGLPMPGCWQK.

The disordered stretch occupies residues 1 to 24 (MLVKKLAGKGGGRESGSEDPRPLG). Topologically, residues 1–33 (MLVKKLAGKGGGRESGSEDPRPLGQRCAGTMPS) are cytoplasmic. Over residues 11–21 (GGRESGSEDPR) the composition is skewed to basic and acidic residues. Residues 34-54 (CTALATLLSVVAVAFCFYLGV) form a helical; Signal-anchor for type II membrane protein membrane-spanning segment. Over 55–666 (KTNDLQARIA…GLPMPGCWQK (612 aa)) the chain is Extracellular. The tract at residues 116 to 168 (LECNCPAGPPGKRGKRGRRGESGPPGQPGPQGPPGPKGDKGEQGDQGPRMVFP) is disordered. Positions 121–164 (PAGPPGKRGKRGRRGESGPPGQPGPQGPPGPKGDKGEQGDQGPR) constitute a Collagen-like 1 domain. The span at 140 to 151 (PGQPGPQGPPGP) shows a compositional bias: pro residues. Positions 181–188 (LIKRRLIK) are interaction with amyloid-beta peptide. Disordered stretches follow at residues 189 to 428 (GDQG…ATEI) and 445 to 666 (LTVT…CWQK). Collagen-like domains follow at residues 192-247 (GQAG…QKGS), 249-308 (GAPG…PGSS), 311-370 (GIKG…AGPP), 373-425 (GERG…DPGA), 455-514 (GPQG…KGEK), 529-588 (GPPG…KGAM), and 589-648 (GEPG…DGLD). The span at 196–208 (PPGPPGPPGPRGP) shows a compositional bias: pro residues. Residues 230-245 (PGEQGLMGPLGPPGQK) show a composition bias toward low complexity. The segment covering 280–290 (EPGKEGEKGDA) has biased composition (basic and acidic residues). Low complexity predominate over residues 336–358 (LPGIKGEPGFIGPQGEPGLPGLP). Composition is skewed to basic and acidic residues over residues 361 to 377 (KGDR…ERGD) and 398 to 407 (SKGDRGDKGD). Low complexity predominate over residues 457 to 466 (QGLQGPKGEQ). The span at 494-503 (GEKGGLGLPG) shows a compositional bias: gly residues. A compositionally biased stretch (pro residues) spans 528–543 (IGPPGPPGPHGPPGPM). The span at 615-638 (RGEKGDLGEKGEKGFRGVKGEKGE) shows a compositional bias: basic and acidic residues.

Forms homodimers and homotrimers. Binds to the fibrillized forms of amyloid-beta protein 40 (beta-APP40) and amyloid-betad protein 42 (beta-APP42). Found associated with beta-APP42 more frequently than with beta-APP40. In terms of processing, undergoes proteolytic cleavage by furin protease to yield the soluble collagen-like Alzheimer amyloid plaque component. Post-translationally, glycosylated. Hydroxylated on proline and lysine residues. As to expression, expressed predominantly in neurons with low levels also detected in heart, testis and eye.

The protein resides in the membrane. Inhibits fibrillization of amyloid-beta peptide during the elongation phase. Has also been shown to assemble amyloid fibrils into protease-resistant aggregates. Binds heparin. This chain is Collagen alpha-1(XXV) chain, found in Mus musculus (Mouse).